Reading from the N-terminus, the 303-residue chain is Protein bottleneck (303 aa).

Disordered stretches follow at residues 102–142 and 185–272; these read SKRN…PTVT and VATT…ASVR. Composition is skewed to low complexity over residues 115–138 and 185–197; these read RQQE…QQQE and VATT…TANS. Positions 260-272 are enriched in polar residues; that stretch reads ATISRQSSSASVR.

Restricted to the blastoderm.

It is found in the cytoplasm. It localises to the cytoskeleton. Its function is as follows. Acts as a regulator of the microfilament network governing cellularization of the embryo. Determines the timing of a key conformational transition in the cortical microfilament network: the proper coordination of membrane invagination and basal closure of the cells. To do this, bnk possibly physically links neighboring contractile units of the early cycle 14 microfilament network in a manner that prevents basal constriction until the proper stage has been reached. Bnk together with nullo and Sry-alpha may provide auxiliary functions, by acting both to stabilize a large and dynamic microfilament structure and regulate its functions. This is Protein bottleneck (bnk) from Drosophila melanogaster (Fruit fly).